The following is a 448-amino-acid chain: Exodeoxyribonuclease 7 large subunit (448 aa).

It belongs to the XseA family. As to quaternary structure, heterooligomer composed of large and small subunits.

The protein localises to the cytoplasm. The catalysed reaction is Exonucleolytic cleavage in either 5'- to 3'- or 3'- to 5'-direction to yield nucleoside 5'-phosphates.. Bidirectionally degrades single-stranded DNA into large acid-insoluble oligonucleotides, which are then degraded further into small acid-soluble oligonucleotides. This is Exodeoxyribonuclease 7 large subunit from Geobacillus kaustophilus (strain HTA426).